The primary structure comprises 353 residues: Photosystem II protein D1 (353 aa).

At Thr2 the chain carries N-acetylthreonine. Thr2 carries the phosphothreonine modification. 3 helical membrane-spanning segments follow: residues 29–46, 118–133, and 142–156; these read YIGW…TAIS, HFLL…EWEL, and WIAV…AATA. His118 serves as a coordination point for chlorophyll a. Tyr126 provides a ligand contact to pheophytin a. [CaMn4O5] cluster contacts are provided by Asp170 and Glu189. Residues 197–218 traverse the membrane as a helical segment; it reads FHMLGVAGVFGGSLFSAMHGSL. His198 provides a ligand contact to chlorophyll a. A quinone-binding positions include His215 and 264-265; that span reads SF. His215 lines the Fe cation pocket. His272 lines the Fe cation pocket. Residues 274 to 288 traverse the membrane as a helical segment; that stretch reads FLAVWPVVGIWFTAM. 4 residues coordinate [CaMn4O5] cluster: His332, Glu333, Asp342, and Ala344. A propeptide spanning residues 345–353 is cleaved from the precursor; the sequence is SVEAPAVNG.

The protein belongs to the reaction center PufL/M/PsbA/D family. PSII is composed of 1 copy each of membrane proteins PsbA, PsbB, PsbC, PsbD, PsbE, PsbF, PsbH, PsbI, PsbJ, PsbK, PsbL, PsbM, PsbT, PsbX, PsbY, PsbZ, Psb30/Ycf12, at least 3 peripheral proteins of the oxygen-evolving complex and a large number of cofactors. It forms dimeric complexes. The cofactor is The D1/D2 heterodimer binds P680, chlorophylls that are the primary electron donor of PSII, and subsequent electron acceptors. It shares a non-heme iron and each subunit binds pheophytin, quinone, additional chlorophylls, carotenoids and lipids. D1 provides most of the ligands for the Mn4-Ca-O5 cluster of the oxygen-evolving complex (OEC). There is also a Cl(-1) ion associated with D1 and D2, which is required for oxygen evolution. The PSII complex binds additional chlorophylls, carotenoids and specific lipids.. Tyr-161 forms a radical intermediate that is referred to as redox-active TyrZ, YZ or Y-Z. In terms of processing, C-terminally processed by CTPA; processing is essential to allow assembly of the oxygen-evolving complex and thus photosynthetic growth.

Its subcellular location is the plastid. It is found in the chloroplast thylakoid membrane. The enzyme catalyses 2 a plastoquinone + 4 hnu + 2 H2O = 2 a plastoquinol + O2. In terms of biological role, photosystem II (PSII) is a light-driven water:plastoquinone oxidoreductase that uses light energy to abstract electrons from H(2)O, generating O(2) and a proton gradient subsequently used for ATP formation. It consists of a core antenna complex that captures photons, and an electron transfer chain that converts photonic excitation into a charge separation. The D1/D2 (PsbA/PsbD) reaction center heterodimer binds P680, the primary electron donor of PSII as well as several subsequent electron acceptors. This chain is Photosystem II protein D1, found in Mesostigma viride (Green alga).